A 184-amino-acid polypeptide reads, in one-letter code: Putative pre-16S rRNA nuclease (184 aa).

Residues 1–23 form a disordered region; it reads MFSSQHRLLYQPSGPDLSKNLDP.

This sequence belongs to the YqgF nuclease family.

Its subcellular location is the cytoplasm. Functionally, could be a nuclease involved in processing of the 5'-end of pre-16S rRNA. The protein is Putative pre-16S rRNA nuclease of Mycobacterium leprae (strain Br4923).